Consider the following 99-residue polypeptide: Small ribosomal subunit protein uS14m (99 aa).

This sequence belongs to the universal ribosomal protein uS14 family.

Its subcellular location is the mitochondrion. This chain is Small ribosomal subunit protein uS14m (RPS14), found in Oenothera berteroana (Bertero's evening primrose).